Reading from the N-terminus, the 281-residue chain is Putative dehydrogenase/reductase SDR family member 4-like 1 (281 aa).

NADP(+) is bound at residue 36–60 (LVTASTDWIGFAVAQRLAQDGAHVV). Ser172 is a substrate binding site. Tyr185 functions as the Proton acceptor in the catalytic mechanism. Lys189 contacts NADP(+). Residues 279–281 (SRL) carry the Peroxisomal targeting signal motif.

Belongs to the short-chain dehydrogenases/reductases (SDR) family.

Functionally, putative oxidoreductase. The protein is Putative dehydrogenase/reductase SDR family member 4-like 1 of Homo sapiens (Human).